Here is a 426-residue protein sequence, read N- to C-terminus: Adenylosuccinate synthetase (426 aa).

GTP-binding positions include 13 to 19 and 41 to 43; these read GDEGKGK and GHT. Residue Asp-14 is the Proton acceptor of the active site. Mg(2+) contacts are provided by Asp-14 and Gly-41. Residues 14–17, 39–42, Thr-129, Arg-143, Gln-224, Thr-239, and Arg-303 each bind IMP; these read DEGK and NAGH. Catalysis depends on His-42, which acts as the Proton donor. 299–305 contacts substrate; the sequence is TTTGRPR. GTP contacts are provided by residues Arg-305, 331-333, and 414-416; these read KLD and GTG.

It belongs to the adenylosuccinate synthetase family. In terms of assembly, homodimer. Requires Mg(2+) as cofactor.

It localises to the cytoplasm. It catalyses the reaction IMP + L-aspartate + GTP = N(6)-(1,2-dicarboxyethyl)-AMP + GDP + phosphate + 2 H(+). Its pathway is purine metabolism; AMP biosynthesis via de novo pathway; AMP from IMP: step 1/2. Its function is as follows. Plays an important role in the de novo pathway of purine nucleotide biosynthesis. Catalyzes the first committed step in the biosynthesis of AMP from IMP. This chain is Adenylosuccinate synthetase, found in Caldicellulosiruptor bescii (strain ATCC BAA-1888 / DSM 6725 / KCTC 15123 / Z-1320) (Anaerocellum thermophilum).